Here is a 416-residue protein sequence, read N- to C-terminus: Formyl-CoA:oxalate CoA-transferase (416 aa).

Residues 17-18 (QS), R38, 72-75 (LNTK), 96-98 (NFH), H104, and 137-140 (KAYE) each bind CoA. The active-site Nucleophile is D169. 248–250 (GGQ) provides a ligand contact to substrate. Position 273 to 275 (273 to 275 (QEQ)) interacts with CoA.

Belongs to the CoA-transferase III family. Frc subfamily. As to quaternary structure, homodimer.

It catalyses the reaction formyl-CoA + oxalate = oxalyl-CoA + formate. Its pathway is metabolic intermediate degradation; oxalate degradation; CO(2) and formate from oxalate: step 1/2. Functionally, involved in the catabolism of oxalate and in the adapatation to low pH via the induction of the oxalate-dependent acid tolerance response (ATR). Catalyzes the transfer of the CoA moiety from formyl-CoA to oxalate. The protein is Formyl-CoA:oxalate CoA-transferase of Escherichia coli (strain ATCC 8739 / DSM 1576 / NBRC 3972 / NCIMB 8545 / WDCM 00012 / Crooks).